A 285-amino-acid chain; its full sequence is Protease HtpX homolog (285 aa).

Transmembrane regions (helical) follow at residues 7 to 27 (TAML…MIGG) and 30 to 50 (GMTI…WFSD). His131 is a Zn(2+) binding site. Glu132 is a catalytic residue. His135 lines the Zn(2+) pocket. 2 helical membrane-spanning segments follow: residues 146–166 (ISAT…FFGG) and 177–197 (IAGI…QMAI). Zn(2+) is bound at residue Glu202.

This sequence belongs to the peptidase M48B family. The cofactor is Zn(2+).

The protein resides in the cell inner membrane. The protein is Protease HtpX homolog of Burkholderia mallei (strain NCTC 10247).